Consider the following 202-residue polypeptide: Chromophore lyase CpcT/CpeT 2 (202 aa).

Belongs to the CpcT/CpeT biliprotein lyase family.

Its function is as follows. Covalently attaches a chromophore to Cys residue(s) of phycobiliproteins. In Gloeobacter violaceus (strain ATCC 29082 / PCC 7421), this protein is Chromophore lyase CpcT/CpeT 2.